The following is a 1009-amino-acid chain: MKKKNWIYALIVTLIIIIAIVSMIFFVQTKYGDQSEKGSRSVSNKNNKIHIAIVNEDQPTTYNGKKVELGQAFIKRLANEKNYKFETVTRNVAESGLKNGGYQVMIVIPENFSKLAMQLDAKTPSKISLQYKTAVGQKEEVAKNTEKVVSNVLNDFNKNLVEIYLTSIIDNLHNAQKNVGAIMTREHGVNSKFSNYLLNPINDFPELFTDTLVNSISANKDITKWFQTYNKSLLSANSDTFRVNTDYNVSTLIEKQNSLFDEHNTAMDKMLQDYKSQKDSVELDNYINALKQMDSQIDQQSSMQDTGKEEYKQTVKENLDKLREIIQSQESPFSKGMIEDYRKQLTESLQDELANNKDLQDALNSIKMNNAQFAENLEKQLHDDIVKEPDTDTTFIYNMSKQDFIAAGLNEDEANKYEAIVKEAKRYKNEYNLKKPLAEHINLTDYDNQVAQDTSSLINDGVKVQRTETIKSNDINQLTVATDPHFNFEGDIKINGKKYDIKDQSVQLDTSNKEYKVEVNGVAKLKKDAEKDFLKDKTMHLQLLFGQANRQDEPNDKKTTSVVDVTLNHNLDGRLSKDALSQQLSALSRFDAHYKMYTDTKGREDKPFDNKRLIDMMVDQVINDMESFKDDKVAVLHQIDSMEENSDKLIDDILNNKKNTTKNKEDISKLIDQLENVKKTFAEEPQEPKIDKGKNDEFNTMSSNLDKEISRISEKSTQLLSDTQESKTIADSVSGQLNQLDNNVNKLHATGRALGVRANDLNRQMAKNDKDNELFAKEFKKVLQNSKDGDRQNQALKAFMSNPVQKKNLENVLANNGNTDVISPTLFVLLMYLLSMITAYIFYSYERAKGQMNFIKDDYSSKNHLWNNVITSGVIGTTGLVEGLIVGLIAMNKFHVLAGYRAKFILMVILTMMVFVLINTYLLRQVKSIGMFLMIAALGLYFVAMNNLKAAGQGVTNKISPLSYIDNMFFNYLNAEHPIGLALVILTVLVIIGFVLNMFIKHFKKERLI.

A run of 6 helical transmembrane segments spans residues 7 to 27 (IYAL…IFFV), 822 to 842 (ISPT…AYIF), 869 to 889 (VITS…VGLI), 903 to 923 (KFIL…TYLL), 928 to 948 (SIGM…MNNL), and 979 to 999 (IGLA…LNMF).

This sequence belongs to the EsaA family. In terms of assembly, homodimer. Interacts with EssB.

The protein localises to the cell membrane. Functionally, component of the type VII secretion system (Ess). Provides together with EssB and other components such as EssC and EssE a secretion platform across the cytoplasmic membrane in the host. The protein is Type VII secretion system accessory factor EsaA of Staphylococcus aureus (strain MSSA476).